The following is a 346-amino-acid chain: MNPLILTIILMTVFLGTMIVMASSHWLMIWIGFEMNLLAIIPILMKKYNPRAMEASTKYFLTQATASMLLMMAIIINLMHSGQWTITKVFNPTASIIMTLALAMKLGLTPFHFWVPEVTQGISLTSGLILLTWQKLAPMSILYQISPSINLNILLTMAVLSILVGGWGGLNQTQLRKIMAYSSIAHMGWMAAILVYNPTLTMLNMLIYIMMTLTMFMLFIHSSSTTTLSLSHTWNKAPLITTLILITLLSMGGLPPLSGFMPKWMIIQELTKNSSIILPTLMAIMALLNLYFYMRLTYSTSLTMFPSTNNMKMKWQFETKQITLLPPLIIASSLLLPLTPMLSILD.

Transmembrane regions (helical) follow at residues 3–23 (PLIL…VMAS), 25–45 (HWLM…PILM), 59–79 (YFLT…INLM), 96–116 (IIMT…FWVP), 122–142 (ISLT…MSIL), 149–169 (INLN…GWGG), 178–198 (IMAY…VYNP), 200–220 (LTML…MLFI), 237–257 (APLI…LPPL), 274–294 (SSII…YFYM), and 322–342 (ITLL…TPML).

It belongs to the complex I subunit 2 family. In terms of assembly, core subunit of respiratory chain NADH dehydrogenase (Complex I) which is composed of 45 different subunits. Interacts with TMEM242.

Its subcellular location is the mitochondrion inner membrane. The enzyme catalyses a ubiquinone + NADH + 5 H(+)(in) = a ubiquinol + NAD(+) + 4 H(+)(out). Core subunit of the mitochondrial membrane respiratory chain NADH dehydrogenase (Complex I) which catalyzes electron transfer from NADH through the respiratory chain, using ubiquinone as an electron acceptor. Essential for the catalytic activity and assembly of complex I. This Equus asinus (Donkey) protein is NADH-ubiquinone oxidoreductase chain 2.